The following is a 1072-amino-acid chain: Serine/threonine-protein kinase 11-interacting protein (1072 aa).

LRR repeat units follow at residues 109 to 130 (SLRQ…RGIY), 132 to 152 (QLES…LSAC), 164 to 185 (ALLS…LRLL), 187 to 209 (ALRF…MDLC), 210 to 231 (ELYH…GPSG), 233 to 254 (ALGT…EQLK), 255 to 276 (NLRH…APLW), and 280 to 301 (ELRK…RAAT). The tract at residues 333–366 (DSSGLGPVIQPLSWPVGSTTETSGGPELSDSLSS) is disordered. Residues serine 388, serine 390, and serine 393 each carry the phosphoserine modification. A compositionally biased stretch (polar residues) spans 441 to 454 (MGSSPLSTTKTPAL). Disordered regions lie at residues 441–522 (MGSS…EQKA) and 741–762 (RPDG…SLSP). Composition is skewed to basic and acidic residues over residues 478 to 492 (KESP…RVEP) and 501 to 510 (EQDKEEGSRE). 3 positions are modified to phosphoserine: serine 757, serine 761, and serine 763. The tract at residues 967–993 (HAESPLPVVSDETSEQPASLGPGPSLQ) is disordered.

It belongs to the STK11IP family. In terms of assembly, found in a ternary complex composed of STK11/LKB1, STK11IP and SMAD4. Interacts with SMAD4. Interacts with STK11/LKB1.

Its subcellular location is the cytoplasm. Its function is as follows. May regulate STK11/LKB1 function by controlling its subcellular localization. This is Serine/threonine-protein kinase 11-interacting protein (Stk11ip) from Mus musculus (Mouse).